The primary structure comprises 340 residues: DNA-directed RNA polymerase subunit alpha (340 aa).

Residues 1 to 233 (MIQDEIPIPV…DLFIIFLNME (233 aa)) are alpha N-terminal domain (alpha-NTD). The interval 264 to 340 (AKEVAFKQIF…QLPKDQFNIS (77 aa)) is alpha C-terminal domain (alpha-CTD).

This sequence belongs to the RNA polymerase alpha chain family. In terms of assembly, in plastids the minimal PEP RNA polymerase catalytic core is composed of four subunits: alpha, beta, beta', and beta''. When a (nuclear-encoded) sigma factor is associated with the core the holoenzyme is formed, which can initiate transcription.

The protein localises to the plastid. It localises to the chloroplast. It catalyses the reaction RNA(n) + a ribonucleoside 5'-triphosphate = RNA(n+1) + diphosphate. In terms of biological role, DNA-dependent RNA polymerase catalyzes the transcription of DNA into RNA using the four ribonucleoside triphosphates as substrates. The sequence is that of DNA-directed RNA polymerase subunit alpha from Psilotum nudum (Whisk fern).